A 296-amino-acid chain; its full sequence is Haloalkane dehalogenase (296 aa).

An AB hydrolase-1 domain is found at 31 to 155 (PILFQHGNPT…QDRDLFQAFR (125 aa)). Asn38 serves as a coordination point for chloride. The Nucleophile role is filled by Asp108. Trp109 provides a ligand contact to chloride. Glu132 functions as the Proton donor in the catalytic mechanism. Residue His272 is the Proton acceptor of the active site.

This sequence belongs to the haloalkane dehalogenase family. Type 2 subfamily. In terms of assembly, monomer.

The protein resides in the periplasm. It carries out the reaction 1-haloalkane + H2O = a halide anion + a primary alcohol + H(+). The enzyme catalyses (3R,6R)-1,3,4,6-tetrachlorocyclohexa-1,4-diene + 2 H2O = 2,5-dichlorocyclohexa-2,5-dien-1,4-diol + 2 chloride + 2 H(+). Its pathway is xenobiotic degradation; gamma-hexachlorocyclohexane degradation. Competitively inhibited by the key pollutants 1,2-dichloroethane (1,2-DCE) and 1,2-dichloropropane (1,2-DCP). Functionally, catalyzes hydrolytic cleavage of carbon-halogen bonds in halogenated aliphatic compounds, leading to the formation of the corresponding primary alcohols, halide ions and protons. Has a broad substrate specificity since not only monochloroalkanes (C3 to C10) but also dichloroalkanes (&gt; C3), bromoalkanes, and chlorinated aliphatic alcohols are good substrates. Shows almost no activity with 1,2-dichloroethane, but very high activity with the brominated analog. Is involved in the degradation of the important environmental pollutant gamma-hexachlorocyclohexane (gamma-HCH or lindane) as it also catalyzes conversion of 1,3,4,6-tetrachloro-1,4-cyclohexadiene (1,4-TCDN) to 2,5-dichloro-2,5-cyclohexadiene-1,4-diol (2,5-DDOL) via the intermediate 2,4,5-trichloro-2,5-cyclohexadiene-1-ol (2,4,5-DNOL). This degradation pathway allows S.japonicum UT26 to grow on gamma-HCH as the sole source of carbon and energy. This chain is Haloalkane dehalogenase, found in Sphingobium indicum (strain DSM 16413 / CCM 7287 / MTCC 6362 / UT26 / NBRC 101211 / UT26S) (Sphingobium japonicum).